The sequence spans 224 residues: Ribose-5-phosphate isomerase A (224 aa).

Substrate contacts are provided by residues 26 to 29 (TGST), 82 to 85 (DGAD), and 95 to 98 (KGGG). The active-site Proton acceptor is the Glu-104. Residue Lys-122 coordinates substrate.

This sequence belongs to the ribose 5-phosphate isomerase family. As to quaternary structure, homodimer.

The enzyme catalyses aldehydo-D-ribose 5-phosphate = D-ribulose 5-phosphate. The protein operates within carbohydrate degradation; pentose phosphate pathway; D-ribose 5-phosphate from D-ribulose 5-phosphate (non-oxidative stage): step 1/1. Catalyzes the reversible conversion of ribose-5-phosphate to ribulose 5-phosphate. The chain is Ribose-5-phosphate isomerase A from Lactococcus lactis subsp. cremoris (strain SK11).